A 570-amino-acid polypeptide reads, in one-letter code: Vacuolar protein sorting-associated protein 45 (570 aa).

Phosphoserine is present on residues serine 307 and serine 441.

The protein belongs to the STXBP/unc-18/SEC1 family. Interacts with ZFYVE20. Interacts with STX6.

The protein resides in the golgi apparatus membrane. It localises to the endosome membrane. May play a role in vesicle-mediated protein trafficking from the Golgi stack through the trans-Golgi network. The sequence is that of Vacuolar protein sorting-associated protein 45 (Vps45) from Mus musculus (Mouse).